Here is a 239-residue protein sequence, read N- to C-terminus: MNTTPDTPTPRALRELTPLEARILGVLVEKQHTVPDTYPLSLNALTAGCNQKTARAPVMNVSEDEVTTALDELKRLSLVMEGSSSRVPRFEHNMNRVLGIPSQAIALLTILLLRGPQTAAELRLNSARLHGFADISSVEAFLDELAARAAARRPAAACAGCAREPLDAPDVRRREHGRLRERGCRRRRGFGAAFRIRGAKGRTEAPRGRSGATQCAGSTDGERTRHRRRRTGRRVLIAS.

The interval 196–239 (IRGAKGRTEAPRGRSGATQCAGSTDGERTRHRRRRTGRRVLIAS) is disordered. Basic residues predominate over residues 224 to 233 (TRHRRRRTGR).

The protein belongs to the UPF0502 family.

This is UPF0502 protein Bcen_5249 from Burkholderia orbicola (strain AU 1054).